A 263-amino-acid chain; its full sequence is Mediator of RNA polymerase II transcription subunit 7 (263 aa).

A compositionally biased stretch (polar residues) spans 1-10 (MADAAQQRTL). Disordered regions lie at residues 1–57 (MADA…PAEL), 101–122 (ITQLYPSSSPADTDRQSPSEPS), and 222–247 (GIAAQSHPQQTDEDGRKESETSQKTI). Over residues 24 to 47 (FTPDNLKRLEEIKKEASKGEDGKP) the composition is skewed to basic and acidic residues. Residues 101 to 111 (ITQLYPSSSPA) show a composition bias toward polar residues. Positions 234–247 (EDGRKESETSQKTI) are enriched in basic and acidic residues.

The protein belongs to the Mediator complex subunit 7 family. As to quaternary structure, component of the Mediator complex.

It localises to the nucleus. Functionally, component of the Mediator complex, a coactivator involved in the regulated transcription of nearly all RNA polymerase II-dependent genes. Mediator functions as a bridge to convey information from gene-specific regulatory proteins to the basal RNA polymerase II transcription machinery. Mediator is recruited to promoters by direct interactions with regulatory proteins and serves as a scaffold for the assembly of a functional preinitiation complex with RNA polymerase II and the general transcription factors. This Aspergillus niger (strain ATCC MYA-4892 / CBS 513.88 / FGSC A1513) protein is Mediator of RNA polymerase II transcription subunit 7 (med7).